An 83-amino-acid chain; its full sequence is Small ribosomal subunit protein bS16 (83 aa).

The protein belongs to the bacterial ribosomal protein bS16 family.

The polypeptide is Small ribosomal subunit protein bS16 (Acidovorax ebreus (strain TPSY) (Diaphorobacter sp. (strain TPSY))).